Here is a 62-residue protein sequence, read N- to C-terminus: Mu-elapitoxin-Na1a (62 aa).

Intrachain disulfides connect C3–C22, C15–C40, C44–C55, and C56–C61.

The protein belongs to the three-finger toxin family. Short-chain subfamily. Orphan group XV sub-subfamily. Expressed by the venom gland.

The protein localises to the secreted. Potent inhibitor of human Nav1.8/SCN10A (IC(50)=141-380 nM). Is highly selective for this channel and acts in a reversible manner. Shows a depolarizing shift of activation and hyperpolarizing shift of inactivation. In contrast to the very similar cytotoxin A5 (AC P62375), does not seem to bind integrin alpha-V/beta-3, since it does not promote or inhibit the proliferation of HUVECs and C-PAE cells. In vivo, in rodent models of inflammatory and neuropathic pain, it alleviates nociceptive behaviors more potently than does morphine. It displays no evident cytotoxic, hemolytic and cardiotoxic activities and produces no obvious adverse responses in mice even at a dose 30-fold higher than that producing a significant analgesic effect. The sequence is that of Mu-elapitoxin-Na1a from Naja atra (Chinese cobra).